The following is a 356-amino-acid chain: Heparan sulfate 2-O-sulfotransferase 1 (356 aa).

The Cytoplasmic portion of the chain corresponds to Met1–Lys11. Residues Leu12–Glu28 traverse the membrane as a helical; Signal-anchor for type II membrane protein segment. A coiled-coil region spans residues Met24–Arg51. Residues Asn29–Asn356 are Lumenal-facing. Adenosine 3',5'-bisphosphate contacts are provided by Lys83, Thr84, Ala85, Ser86, Thr87, and Ser88. 2 N-linked (GlcNAc...) asparagine glycosylation sites follow: Asn108 and Asn127. Residues His140 and His142 contribute to the active site. Arg164 and Ser172 together coordinate adenosine 3',5'-bisphosphate. Cystine bridges form between Cys201–Cys209 and Cys222–Cys228. Residues Tyr279, Ser285, Thr290, and Lys293 each contribute to the adenosine 3',5'-bisphosphate site.

It belongs to the sulfotransferase 3 family. In terms of assembly, homotrimer. Interacts with the C5-epimerase GLCE. N-glycosylated.

It localises to the golgi apparatus membrane. Catalyzes the transfer of a sulfo group from 3'-phospho-5'-adenylyl sulfate (PAPS) to the 2-OH position of iduronic acid (IdoA) or glucuronic acid (GlcA) within the heparan sulfate (HS) chain and participates in HS biosynthesis. Required for metanephric development of kidney formation, suggesting that 2-O-sulfation within HS is essential for signaling between ureteric bud and metanephric mesenchyme. The sequence is that of Heparan sulfate 2-O-sulfotransferase 1 from Pongo abelii (Sumatran orangutan).